Here is a 316-residue protein sequence, read N- to C-terminus: Deoxyribonuclease-1-like 1 (316 aa).

An N-terminal signal peptide occupies residues 1–28; that stretch reads MHSSGGFQKAIHGHALLLLLLLASGAET. Active-site residues include Glu107 and His158. Residues Cys197 and Cys234 are joined by a disulfide bond. Asn271 carries N-linked (GlcNAc...) asparagine glycosylation.

Belongs to the DNase I family.

Its subcellular location is the endoplasmic reticulum. The polypeptide is Deoxyribonuclease-1-like 1 (DNASE1L1) (Bos taurus (Bovine)).